A 326-amino-acid polypeptide reads, in one-letter code: Holliday junction branch migration complex subunit RuvB (326 aa).

Residues 1 to 180 form a large ATPase domain (RuvB-L) region; it reads MRSISCSKEY…FGIPLRLEFY (180 aa). ATP-binding positions include I19, R20, G61, K64, T65, T66, 127 to 129, R170, Y180, and R217; that span reads EDF. T65 is a Mg(2+) binding site. A small ATPAse domain (RuvB-S) region spans residues 181–251; sequence SFEELVDIIK…IADSALSKLG (71 aa). Positions 254-326 are head domain (RuvB-H); that stretch reads KMGLNKLDVD…QGKEYLSLQY (73 aa). Residues R307 and R312 each contribute to the DNA site.

The protein belongs to the RuvB family. As to quaternary structure, homohexamer. Forms an RuvA(8)-RuvB(12)-Holliday junction (HJ) complex. HJ DNA is sandwiched between 2 RuvA tetramers; dsDNA enters through RuvA and exits via RuvB. An RuvB hexamer assembles on each DNA strand where it exits the tetramer. Each RuvB hexamer is contacted by two RuvA subunits (via domain III) on 2 adjacent RuvB subunits; this complex drives branch migration. In the full resolvosome a probable DNA-RuvA(4)-RuvB(12)-RuvC(2) complex forms which resolves the HJ.

It is found in the cytoplasm. The catalysed reaction is ATP + H2O = ADP + phosphate + H(+). Functionally, the RuvA-RuvB-RuvC complex processes Holliday junction (HJ) DNA during genetic recombination and DNA repair, while the RuvA-RuvB complex plays an important role in the rescue of blocked DNA replication forks via replication fork reversal (RFR). RuvA specifically binds to HJ cruciform DNA, conferring on it an open structure. The RuvB hexamer acts as an ATP-dependent pump, pulling dsDNA into and through the RuvAB complex. RuvB forms 2 homohexamers on either side of HJ DNA bound by 1 or 2 RuvA tetramers; 4 subunits per hexamer contact DNA at a time. Coordinated motions by a converter formed by DNA-disengaged RuvB subunits stimulates ATP hydrolysis and nucleotide exchange. Immobilization of the converter enables RuvB to convert the ATP-contained energy into a lever motion, pulling 2 nucleotides of DNA out of the RuvA tetramer per ATP hydrolyzed, thus driving DNA branch migration. The RuvB motors rotate together with the DNA substrate, which together with the progressing nucleotide cycle form the mechanistic basis for DNA recombination by continuous HJ branch migration. Branch migration allows RuvC to scan DNA until it finds its consensus sequence, where it cleaves and resolves cruciform DNA. This Wolbachia sp. subsp. Brugia malayi (strain TRS) protein is Holliday junction branch migration complex subunit RuvB.